The primary structure comprises 382 residues: MKITRLTTYRLPPRWMFLKVETDEGVTGWGEPVIEGRARTVEAAVHELSDYLIGQDPSRINDLWQTMYRAGFYRGGPILMSAIAGIDQALWDIKGKVLGVPVYELLGGLVRDKMRTYSWVGGDRPADVIAGMKALQAGGFDHFKLNGCEEMGIIDTSRAVDAAVARVAEIRSAFGNTVEFGLDFHGRVSAPMAKVLIKELEPYRPLFIEEPVLAEQAETYARLAAHTHLPIAAGERMFSRFDFKRVLEAGGVSILQPDLSHAGGITECVKIAAMAEAYDVALAPHCPLGPIALAACLHVDFVSWNATLQEQSMGIHYNKGAELLDYVRNKADFALEGGYIRPPRLPGLGVDIDEALVIERSKEAPDWRNPVWRHADGSVAEW.

A Mg(2+)-binding site is contributed by D183. H185 serves as the catalytic Proton donor. Mg(2+)-binding residues include E209 and E235. Residue H285 is the Proton acceptor of the active site.

It belongs to the mandelate racemase/muconate lactonizing enzyme family. GalD subfamily. Mg(2+) is required as a cofactor.

The catalysed reaction is D-galactonate = 2-dehydro-3-deoxy-D-galactonate + H2O. It participates in carbohydrate acid metabolism; D-galactonate degradation; D-glyceraldehyde 3-phosphate and pyruvate from D-galactonate: step 1/3. Functionally, catalyzes the dehydration of D-galactonate to 2-keto-3-deoxy-D-galactonate. The sequence is that of D-galactonate dehydratase from Ralstonia pickettii (strain 12J).